The chain runs to 96 residues: MSAITRHGDALVIRLYIQPKASRDQIVGLHGDELKVAITAPPVDGQANAHLTKFLAKQFRVAKSLVVIEKGELGRHKQIRITHPQHIPADVADFIE.

The protein belongs to the UPF0235 family.

The sequence is that of UPF0235 protein PC1_3453 from Pectobacterium carotovorum subsp. carotovorum (strain PC1).